Reading from the N-terminus, the 434-residue chain is GTPase Obg (434 aa).

The 158-residue stretch at 1–158 folds into the Obg domain; that stretch reads MFLDTAKIKV…RELQLELKIL (158 aa). Residues 159–336 enclose the OBG-type G domain; it reads ADVGLVGFPS…LLDATAELLD (178 aa). GTP-binding positions include 165 to 172, 190 to 194, 212 to 215, 282 to 285, and 317 to 319; these read GFPSVGKS, FTTIV, DLPG, NKMD, and SGL. The Mg(2+) site is built by Ser172 and Thr192. The 79-residue stretch at 356 to 434 folds into the OCT domain; sequence GFDEEEKAFE…IGKFEFEFVD (79 aa).

The protein belongs to the TRAFAC class OBG-HflX-like GTPase superfamily. OBG GTPase family. In terms of assembly, monomer. Requires Mg(2+) as cofactor.

The protein localises to the cytoplasm. Functionally, an essential GTPase which binds GTP, GDP and possibly (p)ppGpp with moderate affinity, with high nucleotide exchange rates and a fairly low GTP hydrolysis rate. Plays a role in control of the cell cycle, stress response, ribosome biogenesis and in those bacteria that undergo differentiation, in morphogenesis control. In Streptococcus pneumoniae (strain ATCC 700669 / Spain 23F-1), this protein is GTPase Obg.